An 800-amino-acid chain; its full sequence is Aldehyde dehydrogenase family 16 member A1 (800 aa).

The protein belongs to the aldehyde dehydrogenase family. As to quaternary structure, interacts with SPG21.

This chain is Aldehyde dehydrogenase family 16 member A1 (ALDH16A1), found in Bos taurus (Bovine).